The sequence spans 369 residues: Uroporphyrinogen decarboxylase (369 aa).

Residues arginine 39, alanine 41, arginine 43, arginine 52, aspartate 88, tyrosine 166, serine 221, and histidine 341 each coordinate coproporphyrinogen I. Coproporphyrinogen III contacts are provided by arginine 39, alanine 41, and arginine 43. Coproporphyrinogen III-binding residues include aspartate 88, tyrosine 166, serine 221, and histidine 341.

It belongs to the uroporphyrinogen decarboxylase family. Homodimer.

It is found in the cytoplasm. The protein localises to the cytosol. The catalysed reaction is uroporphyrinogen III + 4 H(+) = coproporphyrinogen III + 4 CO2. It carries out the reaction uroporphyrinogen I + 4 H(+) = coproporphyrinogen I + 4 CO2. Its pathway is porphyrin-containing compound metabolism; protoporphyrin-IX biosynthesis; coproporphyrinogen-III from 5-aminolevulinate: step 4/4. Its function is as follows. Catalyzes the sequential decarboxylation of the four acetate side chains of uroporphyrinogen to form coproporphyrinogen and participates in the fifth step in the heme biosynthetic pathway. Isomer I or isomer III of uroporphyrinogen may serve as substrate, but only coproporphyrinogen III can ultimately be converted to heme. In vitro also decarboxylates pentacarboxylate porphyrinogen I. The polypeptide is Uroporphyrinogen decarboxylase (Danio rerio (Zebrafish)).